A 336-amino-acid polypeptide reads, in one-letter code: Fructose-1,6-bisphosphatase class 1 (336 aa).

4 residues coordinate Mg(2+): Glu-90, Asp-112, Leu-114, and Asp-115. Substrate-binding positions include 115 to 118, Asn-211, and Lys-277; that span reads DGSS. Glu-283 serves as a coordination point for Mg(2+).

It belongs to the FBPase class 1 family. In terms of assembly, homotetramer. Mg(2+) is required as a cofactor.

It localises to the cytoplasm. It carries out the reaction beta-D-fructose 1,6-bisphosphate + H2O = beta-D-fructose 6-phosphate + phosphate. It participates in carbohydrate biosynthesis; gluconeogenesis. This Pseudomonas fluorescens (strain SBW25) protein is Fructose-1,6-bisphosphatase class 1.